The primary structure comprises 703 residues: Elongation factor G 2 (703 aa).

In terms of domain architecture, tr-type G spans 8–291; that stretch reads ELYRNIGIVA…AVIDYLPAPS (284 aa). GTP contacts are provided by residues 17 to 24, 89 to 93, and 143 to 146; these read AHVDAGKT, DTPGH, and NKMD.

The protein belongs to the TRAFAC class translation factor GTPase superfamily. Classic translation factor GTPase family. EF-G/EF-2 subfamily.

The protein resides in the cytoplasm. Catalyzes the GTP-dependent ribosomal translocation step during translation elongation. During this step, the ribosome changes from the pre-translocational (PRE) to the post-translocational (POST) state as the newly formed A-site-bound peptidyl-tRNA and P-site-bound deacylated tRNA move to the P and E sites, respectively. Catalyzes the coordinated movement of the two tRNA molecules, the mRNA and conformational changes in the ribosome. The protein is Elongation factor G 2 (fusB) of Pseudomonas putida (strain ATCC 47054 / DSM 6125 / CFBP 8728 / NCIMB 11950 / KT2440).